Consider the following 216-residue polypeptide: 2',3'-cyclic-nucleotide 3'-phosphodiesterase (216 aa).

The active-site Proton donor/acceptor is the H39. T41 contributes to the substrate binding site. H153 acts as the Proton donor/acceptor in catalysis. Residues S155 and Y158 each coordinate substrate.

Belongs to the 2H phosphoesterase superfamily. CPD1 family.

The protein resides in the golgi apparatus. It catalyses the reaction a nucleoside 2',3'-cyclic phosphate + H2O = a nucleoside 2'-phosphate + H(+). Functionally, involved in the metabolism of ADP-ribose 1',2'-cyclic phosphate which is produced as a consequence of tRNA splicing. This is 2',3'-cyclic-nucleotide 3'-phosphodiesterase (CPD1) from Yarrowia lipolytica (strain CLIB 122 / E 150) (Yeast).